The primary structure comprises 379 residues: Cobalt-precorrin-5B C(1)-methyltransferase (379 aa).

Belongs to the CbiD family.

It catalyses the reaction Co-precorrin-5B + S-adenosyl-L-methionine = Co-precorrin-6A + S-adenosyl-L-homocysteine. It functions in the pathway cofactor biosynthesis; adenosylcobalamin biosynthesis; cob(II)yrinate a,c-diamide from sirohydrochlorin (anaerobic route): step 6/10. In terms of biological role, catalyzes the methylation of C-1 in cobalt-precorrin-5B to form cobalt-precorrin-6A. The protein is Cobalt-precorrin-5B C(1)-methyltransferase of Edwardsiella ictaluri (strain 93-146).